We begin with the raw amino-acid sequence, 332 residues long: Hygromycin-B 7''-O-kinase (332 aa).

Aspartate 223 acts as the Proton acceptor in catalysis.

It belongs to the aminoglycoside phosphotransferase family.

It carries out the reaction hygromycin B + ATP = 7''-O-phosphohygromycin B + ADP + H(+). Its function is as follows. The aminoglycoside phosphotransferases achieve inactivation of their antibiotic substrates by phosphorylation. The polypeptide is Hygromycin-B 7''-O-kinase (hyg) (Streptomyces hygroscopicus).